A 221-amino-acid polypeptide reads, in one-letter code: Placenta growth factor (221 aa).

A signal peptide spans 1-18 (MPVMRLFPCFLQLLAGLA). Asn-33 carries an N-linked (GlcNAc...) asparagine glycan. Intrachain disulfides connect Cys-52/Cys-94, Cys-83/Cys-128, and Cys-87/Cys-130. N-linked (GlcNAc...) asparagine glycosylation is present at Asn-101. Residues 175–221 (QSAVWPSSPVPEEIPRMHPGRNGKKQQRKPLREKMKPERCGDAVPRR) are disordered. The segment covering 192 to 203 (HPGRNGKKQQRK) has biased composition (basic residues). The interval 193 to 213 (PGRNGKKQQRKPLREKMKPER) is heparin-binding. Residues 204–221 (PLREKMKPERCGDAVPRR) are compositionally biased toward basic and acidic residues.

The protein belongs to the PDGF/VEGF growth factor family. In terms of assembly, antiparallel homodimer; disulfide-linked. Also found as heterodimer with VEGFA/VEGF. Isoform PlGF-3 is found both as homodimer and as monomer. In terms of processing, N-glycosylated. As to expression, while the three isoforms are present in most placental tissues, PlGF-2 is specific to early (8 week) placenta and only PlGF-1 is found in the colon and mammary carcinomas.

It is found in the secreted. In terms of biological role, growth factor active in angiogenesis and endothelial cell growth, stimulating their proliferation and migration. It binds to the receptor FLT1/VEGFR-1. Isoform PlGF-2 binds NRP1/neuropilin-1 and NRP2/neuropilin-2 in a heparin-dependent manner. Also promotes cell tumor growth. This is Placenta growth factor (PGF) from Homo sapiens (Human).